A 352-amino-acid polypeptide reads, in one-letter code: Molybdenum import ATP-binding protein ModC (352 aa).

Residues 1 to 229 form the ABC transporter domain; sequence MLELNFSQTL…SVMNPWLPKE (229 aa). Position 31 to 38 (31 to 38) interacts with ATP; sequence GVSGAGKT. Residues 289 to 352 enclose the Mop domain; that stretch reads QTSIRNVLRA…AQIKSVSITA (64 aa).

It belongs to the ABC transporter superfamily. Molybdate importer (TC 3.A.1.8) family. In terms of assembly, the complex is composed of two ATP-binding proteins (ModC), two transmembrane proteins (ModB) and a solute-binding protein (ModA).

It localises to the cell inner membrane. It carries out the reaction molybdate(out) + ATP + H2O = molybdate(in) + ADP + phosphate + H(+). Functionally, part of the ABC transporter complex ModABC involved in molybdenum import. Responsible for energy coupling to the transport system. In Escherichia coli (strain K12), this protein is Molybdenum import ATP-binding protein ModC.